The chain runs to 1406 residues: MKDLLDIMKSPADNGKREFDSIQITLAAPETIKSWSHGEVKKPETINYRTFKPERDGLFCAKIFGPVKDFECLCGKYKRRKFQGVICEKCGVEVTTAKVRRDRMGHIDLASPVAHIWFLKSLPSRIGLLLDMTLRDIERVLYFESYVVTDPGMTSLEKYQLLDDEDYYKALEEFGDEFIAKMGAEAVQDLLKDIDIDLEIDDLREAIPNTGSETKLKKMSKRLKLLEAFRDSNNKPEWMVMSILPVLPPDLRPLVPLEGGRFATSDLNDLYRRVINRNNRLKRLLELNAPDIIVRNEKRMLQESVDALLDNGRRGRAITGSNKRPLKSLADMIKGKQGRFRQNLLGKRVDYSGRSVIVVGPTLRLHQCGLPKKMALELFKPFTYSKLLSHGMATTIKQAKKMVEREEPQVWDMLAMVIREHPVLLNRAPTLHRLGLQAFEPVLIEGKAIQLHPLVCTAFNADFDGDQMAVHVPLTLEAQLEARTLMMSTNNILSPANGDPIIVPSQDVVLGLYYISRSAVNAKGEGMIFATVNEALRAIGSNDLHVNAKIKVRVTETIFDEEGNSTKQTTLQETVAGRLLIWNVMPKGMRFAECNVEMTKKNISKLMNSCYRTRGVKESVIFADQLMYLGFAQATLSGVSIGIEDMVIPPMKKELIEAADAEVREIEQQFEQGFVTAGERYNKVVDIWSRTNDKVAKAMMDNLATDIVINAQGEEEEQKSFNSIFIMSDSGARGSAAQIRQLAGMRGLMAKPDGSIIETPIKANFREGLSVLQYFISTHGARKGLADTALKTANSGYLTRRLVDVAQDLVITENDCGTEKGVRMTPHIQGGEIIEKLGDRVLGRVVARDVMSREDEVLLAAGTLIDEHGVTVIDDNGIDEVWVRSVITCDVPHGVCAQCYGRDLARGHKVNIGESVGVMAAQSIGEPGTQLTMRTFHVGGAASSTSVDNSISARNTGFIRFHNMKTVDHVDGHLVIVSRSAEIGIADDVGRERERYKVPYGSSVLVKDGDEVESGQAIAKWDPHTHPIITEFAGKARFSDIIDGSTATVKIDEATGMSSFEILGSKDRPSNSKDLRPAIILDTTGGKEVVYFLPAETIIRVSDGEEVTAGSVLGRVPQATSGTKDITGGLPRVADLFEARRPKDHAIMAEMSGVVSFGSSTKGKNRFIITNEDGEVHEELIPKWRQINVFENETVARGEVIADGPLNPHDILRLQGETALANYIVDEVQDVYRLQGVKINDKHIEVIIRQMLRKVEITDAGDSNYFKGDQVEYADVKATNEKLLAEDKFPVQFERQLLGITKASLATESFISAASFQETTRVLTAAAVEGKVDELRGLKENVVVGRLIPAGTGLAYHAARKKAKEGKPAYDVESALDAAFDIEATTSAQDFRSFDEAFAQELSQDK.

The Zn(2+) site is built by Cys-72, Cys-74, Cys-87, and Cys-90. Positions 462, 464, and 466 each coordinate Mg(2+). Cys-816, Cys-889, Cys-896, and Cys-899 together coordinate Zn(2+).

It belongs to the RNA polymerase beta' chain family. In terms of assembly, the RNAP catalytic core consists of 2 alpha, 1 beta, 1 beta' and 1 omega subunit. When a sigma factor is associated with the core the holoenzyme is formed, which can initiate transcription. Mg(2+) is required as a cofactor. The cofactor is Zn(2+).

It catalyses the reaction RNA(n) + a ribonucleoside 5'-triphosphate = RNA(n+1) + diphosphate. In terms of biological role, DNA-dependent RNA polymerase catalyzes the transcription of DNA into RNA using the four ribonucleoside triphosphates as substrates. In Psychrobacter sp. (strain PRwf-1), this protein is DNA-directed RNA polymerase subunit beta'.